Here is a 62-residue protein sequence, read N- to C-terminus: Large ribosomal subunit protein bL28 (62 aa).

This sequence belongs to the bacterial ribosomal protein bL28 family.

The sequence is that of Large ribosomal subunit protein bL28 from Acidothermus cellulolyticus (strain ATCC 43068 / DSM 8971 / 11B).